A 973-amino-acid polypeptide reads, in one-letter code: Putative helicase 022R (973 aa).

A disordered region spans residues 473-502 (AKARGGRDSGNEDDEEDSATDEDDSNPWDS). Residues 483 to 498 (NEDDEEDSATDEDDSN) are compositionally biased toward acidic residues. Residues 658–840 (GPVTKLLAFF…FVTPGTTAPA (183 aa)) enclose the SF3 helicase domain. An ATP-binding site is contributed by 702 to 709 (GTGNNGKT).

The protein is Putative helicase 022R of Frog virus 3 (isolate Goorha) (FV-3).